A 487-amino-acid chain; its full sequence is Protein FAM221B (487 aa).

Composition is skewed to polar residues over residues 1 to 13 and 36 to 48; these read MEAN…PQDT and HETP…SQKH. Disordered regions lie at residues 1 to 103 and 132 to 289; these read MEAN…QSVT and QLSP…VTSR. Residues 81–103 are compositionally biased toward low complexity; that stretch reads PPVKSSSSGLLSLPPQLSPQSVT. Basic and acidic residues-rich tracts occupy residues 227 to 236 and 243 to 253; these read ESEHFPKHSF and AKEDESTKEGE. Phosphoserine is present on Ser248.

It belongs to the FAM221 family.

The polypeptide is Protein FAM221B (Fam221b) (Mus musculus (Mouse)).